A 23-amino-acid chain; its full sequence is NADH-ubiquinone oxidoreductase 29 kDa subunit (23 aa).

In terms of assembly, complex I is composed of about 45 different subunits.

It localises to the mitochondrion inner membrane. It carries out the reaction a ubiquinone + NADH + 5 H(+)(in) = a ubiquinol + NAD(+) + 4 H(+)(out). In terms of biological role, transfer of electrons from NADH to the respiratory chain. The immediate electron acceptor for the enzyme is believed to be ubiquinone. In Solanum tuberosum (Potato), this protein is NADH-ubiquinone oxidoreductase 29 kDa subunit.